We begin with the raw amino-acid sequence, 91 residues long: Small ribosomal subunit protein bS16c (91 aa).

The protein belongs to the bacterial ribosomal protein bS16 family.

The protein localises to the plastid. Its subcellular location is the chloroplast. The chain is Small ribosomal subunit protein bS16c from Vitis vinifera (Grape).